Consider the following 297-residue polypeptide: Methionyl-tRNA formyltransferase (297 aa).

The interval 31 to 52 (QPPRAAGRGQKPRPSPVHRAAE) is disordered. Position 108 to 111 (108 to 111 (SLLP)) interacts with (6S)-5,6,7,8-tetrahydrofolate.

Belongs to the Fmt family.

The catalysed reaction is L-methionyl-tRNA(fMet) + (6R)-10-formyltetrahydrofolate = N-formyl-L-methionyl-tRNA(fMet) + (6S)-5,6,7,8-tetrahydrofolate + H(+). Attaches a formyl group to the free amino group of methionyl-tRNA(fMet). The formyl group appears to play a dual role in the initiator identity of N-formylmethionyl-tRNA by promoting its recognition by IF2 and preventing the misappropriation of this tRNA by the elongation apparatus. This is Methionyl-tRNA formyltransferase from Paracoccus denitrificans (strain Pd 1222).